Consider the following 648-residue polypeptide: DNA ligase (648 aa).

Residues 30–34 (DEEYD), 79–80 (SM), and Glu108 contribute to the NAD(+) site. The active-site N6-AMP-lysine intermediate is Lys110. The NAD(+) site is built by Arg131, Glu165, Lys280, and Lys304. Residues Cys398, Cys401, Cys414, and Cys419 each coordinate Zn(2+). The region spanning 573-648 (AKENPFKGKI…LTEDEMRAML (76 aa)) is the BRCT domain.

It belongs to the NAD-dependent DNA ligase family. LigA subfamily. Mg(2+) is required as a cofactor. The cofactor is Mn(2+).

It catalyses the reaction NAD(+) + (deoxyribonucleotide)n-3'-hydroxyl + 5'-phospho-(deoxyribonucleotide)m = (deoxyribonucleotide)n+m + AMP + beta-nicotinamide D-nucleotide.. DNA ligase that catalyzes the formation of phosphodiester linkages between 5'-phosphoryl and 3'-hydroxyl groups in double-stranded DNA using NAD as a coenzyme and as the energy source for the reaction. It is essential for DNA replication and repair of damaged DNA. This chain is DNA ligase, found in Sulfurovum sp. (strain NBC37-1).